The primary structure comprises 316 residues: MLP-like protein 34 (316 aa).

This sequence belongs to the MLP family.

This chain is MLP-like protein 34 (MLP34), found in Arabidopsis thaliana (Mouse-ear cress).